The sequence spans 143 residues: Cofilin (143 aa).

The ADF-H domain occupies 5–137 (GVAVSDEALK…AYESVLEKIS (133 aa)).

It belongs to the actin-binding proteins ADF family.

The protein localises to the cytoplasm. It localises to the cytoskeleton. It is found in the nucleus matrix. Its function is as follows. Controls reversibly actin polymerization and depolymerization in a pH-sensitive manner. It has the ability to bind G- and F-actin in a 1:1 ratio of cofilin to actin. Binding to F-actin is regulated by tropomyosin. It is the major component of intranuclear and cytoplasmic actin rods. Required for accumulation of actin at the cell division site via depolymerizing actin at the cell ends. In association with myosin II has a role in the assembly of the contractile ring via severing actin filaments. Involved in the maintenance of the contractile ring once formed. In association with profilin and capping protein, has a role in the mitotic reorganization of the actin cytoskeleton. This chain is Cofilin (COF1), found in Ogataea parapolymorpha (strain ATCC 26012 / BCRC 20466 / JCM 22074 / NRRL Y-7560 / DL-1) (Yeast).